Consider the following 249-residue polypeptide: Coproheme decarboxylase (249 aa).

Fe-coproporphyrin III-binding positions include arginine 131, 145 to 149, histidine 172, and glutamine 185; that span reads YPMNK. The active site involves tyrosine 145.

This sequence belongs to the ChdC family. Type 1 subfamily. Fe-coproporphyrin III serves as cofactor.

It catalyses the reaction Fe-coproporphyrin III + 2 H2O2 + 2 H(+) = heme b + 2 CO2 + 4 H2O. The catalysed reaction is Fe-coproporphyrin III + H2O2 + H(+) = harderoheme III + CO2 + 2 H2O. It carries out the reaction harderoheme III + H2O2 + H(+) = heme b + CO2 + 2 H2O. The protein operates within porphyrin-containing compound metabolism; protoheme biosynthesis. In terms of biological role, involved in coproporphyrin-dependent heme b biosynthesis. Catalyzes the decarboxylation of Fe-coproporphyrin III (coproheme) to heme b (protoheme IX), the last step of the pathway. The reaction occurs in a stepwise manner with a three-propionate intermediate. This chain is Coproheme decarboxylase, found in Staphylococcus carnosus (strain TM300).